A 336-amino-acid chain; its full sequence is UDP-galactose transporter 1 (336 aa).

9 consecutive transmembrane segments (helical) span residues 11–31 (LAIL…KWIF), 38–58 (FPLS…YIVI), 83–103 (FVFC…PVSF), 131–151 (IWAS…TELS), 154–174 (MFGF…TILA), 193–213 (APFA…SGIL), 227–247 (IIIL…FYVI), 254–274 (TFNV…WLIF), and 278–298 (ISYM…FYGY).

This sequence belongs to the TPT transporter family. TPT (TC 2.A.7.9) subfamily.

It is found in the membrane. In terms of biological role, nucleotide sugar transporter that specifically transports UDP-galactose. The protein is UDP-galactose transporter 1 of Arabidopsis thaliana (Mouse-ear cress).